Consider the following 310-residue polypeptide: Methionyl-tRNA formyltransferase (310 aa).

Residue 109–112 (SLLP) coordinates (6S)-5,6,7,8-tetrahydrofolate.

It belongs to the Fmt family.

It carries out the reaction L-methionyl-tRNA(fMet) + (6R)-10-formyltetrahydrofolate = N-formyl-L-methionyl-tRNA(fMet) + (6S)-5,6,7,8-tetrahydrofolate + H(+). Its function is as follows. Attaches a formyl group to the free amino group of methionyl-tRNA(fMet). The formyl group appears to play a dual role in the initiator identity of N-formylmethionyl-tRNA by promoting its recognition by IF2 and preventing the misappropriation of this tRNA by the elongation apparatus. This chain is Methionyl-tRNA formyltransferase, found in Macrococcus caseolyticus (strain JCSC5402) (Macrococcoides caseolyticum).